A 137-amino-acid chain; its full sequence is MPTINQLIRKGRKSKGSKSNSPALNFGYNSYKKVQTNNSAPQKRGVATRVGTMTPKKPNSALRKYARVRLSNLIEVTAYIPGIGHNLQEHSVVLIRGGRVKDLPGVRYHIVRGALDTAGVEGRMQSRSKYGAKKPKK.

Positions 1–57 (MPTINQLIRKGRKSKGSKSNSPALNFGYNSYKKVQTNNSAPQKRGVATRVGTMTPKK) are disordered. Positions 32–41 (KKVQTNNSAP) are enriched in polar residues. A 3-methylthioaspartic acid modification is found at aspartate 102.

This sequence belongs to the universal ribosomal protein uS12 family. Part of the 30S ribosomal subunit. Contacts proteins S8 and S17. May interact with IF1 in the 30S initiation complex.

Its function is as follows. With S4 and S5 plays an important role in translational accuracy. In terms of biological role, interacts with and stabilizes bases of the 16S rRNA that are involved in tRNA selection in the A site and with the mRNA backbone. Located at the interface of the 30S and 50S subunits, it traverses the body of the 30S subunit contacting proteins on the other side and probably holding the rRNA structure together. The combined cluster of proteins S8, S12 and S17 appears to hold together the shoulder and platform of the 30S subunit. This chain is Small ribosomal subunit protein uS12, found in Ligilactobacillus salivarius (strain UCC118) (Lactobacillus salivarius).